Here is a 362-residue protein sequence, read N- to C-terminus: MATLSFRNVKKTYAGNVPVIHGIDMDVADGEFIVIVGPSGCGKSTLMRMVAGLETVTEGEILIDDKVVNTLEPAERDIAMVFQNYALYPHMSVFDNMAYGLKIRRLPKDEIRKRVEAAAQILELGKLLDRRPRALSGGQRQRVAMGRAIVREPKVFLFDEPLSNLDAKLRVAMRLEILKLHRRLNTTSLYVTHDQVEAMTLAHRMVVMYQGVPEQIGTPMEVFEKPASTFVAGFIGSPPMNLLEVAVGGDGIVHTSDGIALDISPLAVPQQVRGRKVVMGLRPEHMLLNAQGLAAEIEMVETLGSEQLVHGRCGKHMVVVRCSTRQFSETPARVGDTLTIGPDGRHPLHWFEADTGRRVEGL.

The ABC transporter domain maps to 4-235; the sequence is LSFRNVKKTY…PASTFVAGFI (232 aa). 37 to 44 is a binding site for ATP; it reads GPSGCGKS.

It belongs to the ABC transporter superfamily. sn-glycerol-3-phosphate importer (TC 3.A.1.1.3) family. As to quaternary structure, the complex is composed of two ATP-binding proteins (UgpC), two transmembrane proteins (UgpA and UgpE) and a solute-binding protein (UgpB).

The protein localises to the cell inner membrane. The catalysed reaction is sn-glycerol 3-phosphate(out) + ATP + H2O = sn-glycerol 3-phosphate(in) + ADP + phosphate + H(+). Its function is as follows. Part of the ABC transporter complex UgpBAEC involved in sn-glycerol-3-phosphate (G3P) import. Responsible for energy coupling to the transport system. The sequence is that of sn-glycerol-3-phosphate import ATP-binding protein UgpC from Bordetella pertussis (strain Tohama I / ATCC BAA-589 / NCTC 13251).